The chain runs to 288 residues: Peroxisomal membrane protein pex13 (288 aa).

The interval methionine 1–glutamine 32 is disordered. Residues serine 22–glutamine 32 are compositionally biased toward polar residues. A helical membrane pass occupies residues isoleucine 178–isoleucine 198. An SH3 domain is found at aspartate 222–arginine 288.

The protein belongs to the peroxin-13 family. In terms of assembly, interacts (via SH3 domain) with PEX14 (via SH3-binding motif); forming the PEX13-PEX14 docking complex.

It localises to the peroxisome membrane. Functionally, component of the PEX13-PEX14 docking complex, a translocon channel that specifically mediates the import of peroxisomal cargo proteins bound to PEX5 receptor. The PEX13-PEX14 docking complex forms a large import pore which can be opened to a diameter of about 9 nm. Mechanistically, PEX5 receptor along with cargo proteins associates with the PEX14 subunit of the PEX13-PEX14 docking complex in the cytosol, leading to the insertion of the receptor into the organelle membrane with the concomitant translocation of the cargo into the peroxisome matrix. The polypeptide is Peroxisomal membrane protein pex13 (pex13) (Schizosaccharomyces pombe (strain 972 / ATCC 24843) (Fission yeast)).